We begin with the raw amino-acid sequence, 539 residues long: MADEDGEGIHPSTPHRNGGGGGGSGLHCAGNGGGGGGGPRVVRIVKSESGYGFNVRGQVSEGGQLRSINGELYAPLQHVSAVLPGGAADRAGVRKGDRILEVNGVNVEGATHKQVVDLIRAGEKELILTVLSVPPHEADNLDPSDDSLGQSFYDYTEKQAVPISVPTYKHVEQNGEKFVVYNVYMAGRQLCSKRYREFAILHQNLKREFANFTFPRLPGKWPFSLSEQQLDARRRGLEEYLEKVCSIRVIGESDIMQEFLSESDENYNGVSDVELRVALPDGATVTVRVKKNSTTDQVYQAIAAKVGMDSTTVNYFALFEVINHSFVRKLAPNEFPHKLYVQNYTSAVPGTCLTIRKWLFTTEEEVLLNDNDLAVTYFFHQAVDDVKKGYIKAEEKSYQLQKLYEQRKMVMYLNMLRTCEGYNEIIFPHCACDSRRKGHVITAISITHFKLHACTEEGQLENQVIAFEWDEMQRWDTDEEGMAFCFEYARGEKKPRWVKIFTPYFNYMHECFERVFCELKWRKENIFQMARSQQRDVAT.

The interval 1–40 (MADEDGEGIHPSTPHRNGGGGGGSGLHCAGNGGGGGGGPR) is disordered. The segment covering 17–39 (NGGGGGGSGLHCAGNGGGGGGGP) has biased composition (gly residues). The region spanning 41 to 134 (VVRIVKSESG…ELILTVLSVP (94 aa)) is the PDZ domain. Phosphoserine occurs at positions 49 and 60. The PX domain maps to 159-267 (QAVPISVPTY…EFLSESDENY (109 aa)). One can recognise a Ras-associating domain in the interval 271 to 360 (SDVELRVALP…TCLTIRKWLF (90 aa)). Positions 271–360 (SDVELRVALP…TCLTIRKWLF (90 aa)) are FERM-like region F1. Positions 371–419 (NDLAVTYFFHQAVDDVKKGYIKAEEKSYQLQKLYEQRKMVMYLNMLRTC) are FERM-like region F2. Residues 423-523 (NEIIFPHCAC…RVFCELKWRK (101 aa)) are FERM-like region F3.

Core component of the SNX27-retromer, a multiprotein complex composed of SNX27, the WASH complex and the retromer complex. Interacts (via PDZ domain) with a number of target transmembrane proteins (via PDZ-binding motif): ABCC4, ADRB2, ARHGEF7, GRIA1, GRIA2, GRIN1, GRIN2A GRIN2C, KCNJ6, KCNJ9 and SLC2A1/GLUT1. Interacts (via the FERM-like regions) with the WASH complex. Interacts with SNX1. Interacts with CYTIP. Interacts with DGKZ. Interacts with MCC. Interacts (via PDZ domains) with SLC9A3; directs SLC9A3 membrane insertion from early endosomes to the plasma membrane. As to expression, isoform 1 is predominantly expressed in the testis, whereas isoform 2 is predominant in various brain regions, including, neocortex, paleocortex, striatum, hippocampus, cerebellum and brain stem. Expressed in cells of hematopoietic origin.

The protein localises to the early endosome membrane. The protein resides in the cytoplasm. Its subcellular location is the cytosol. In terms of biological role, involved in the retrograde transport from endosome to plasma membrane, a trafficking pathway that promotes the recycling of internalized transmembrane proteins. Following internalization, endocytosed transmembrane proteins are delivered to early endosomes and recycled to the plasma membrane instead of being degraded in lysosomes. SNX27 specifically binds and directs sorting of a subset of transmembrane proteins containing a PDZ-binding motif at the C-terminus: following interaction with target transmembrane proteins, associates with the retromer complex, preventing entry into the lysosomal pathway, and promotes retromer-tubule based plasma membrane recycling. SNX27 also binds with the WASH complex. Interacts with membranes containing phosphatidylinositol-3-phosphate (PtdIns(3P)). May participate in establishment of natural killer cell polarity. Recruits CYTIP to early endosomes. The chain is Sorting nexin-27 (Snx27) from Rattus norvegicus (Rat).